Here is a 428-residue protein sequence, read N- to C-terminus: Putative zinc metalloprotease SACOL1281 (428 aa).

H21 is a binding site for Zn(2+). Residue E22 is part of the active site. Residue H25 coordinates Zn(2+). Transmembrane regions (helical) follow at residues 172–194 (FLTL…IGLA), 309–331 (GSTY…GFSF), 352–374 (IISL…LIPI), and 401–420 (TTII…LVTW). The region spanning 186–269 (ALVLFIGLAY…TKSVELTPKK (84 aa)) is the PDZ domain.

Belongs to the peptidase M50B family. The cofactor is Zn(2+).

The protein localises to the cell membrane. This Staphylococcus aureus (strain COL) protein is Putative zinc metalloprotease SACOL1281.